We begin with the raw amino-acid sequence, 588 residues long: Sperm-associated microtubule inner protein 4 (588 aa).

Phosphothreonine is present on threonine 219. A phosphoserine mark is found at serine 224, serine 406, serine 421, serine 427, and serine 437. Residue tyrosine 441 is modified to Phosphotyrosine. A phosphoserine mark is found at serine 457 and serine 484. Threonine 512 is modified (phosphothreonine). Residue serine 516 is modified to Phosphoserine. Lysine 543 participates in a covalent cross-link: Glycyl lysine isopeptide (Lys-Gly) (interchain with G-Cter in SUMO2). Serine 545 bears the Phosphoserine mark.

Its subcellular location is the cytoplasm. It localises to the cytoskeleton. The protein localises to the microtubule organizing center. The protein resides in the centrosome. It is found in the flagellum axoneme. Its function is as follows. Microtubule inner protein (MIP) part of the dynein-decorated doublet microtubules (DMTs) in flagellum axoneme. May serve to reinforce and thus stabilize the microtubule structure in the sperm flagella. This is Sperm-associated microtubule inner protein 4 (Spmip4) from Rattus norvegicus (Rat).